Consider the following 209-residue polypeptide: FMN-dependent NADH:quinone oxidoreductase (209 aa).

FMN is bound by residues serine 18, 102–105 (MYNF), and 146–149 (SRGG).

Belongs to the azoreductase type 1 family. Homodimer. The cofactor is FMN.

The catalysed reaction is 2 a quinone + NADH + H(+) = 2 a 1,4-benzosemiquinone + NAD(+). It carries out the reaction N,N-dimethyl-1,4-phenylenediamine + anthranilate + 2 NAD(+) = 2-(4-dimethylaminophenyl)diazenylbenzoate + 2 NADH + 2 H(+). In terms of biological role, quinone reductase that provides resistance to thiol-specific stress caused by electrophilic quinones. Its function is as follows. Also exhibits azoreductase activity. Catalyzes the reductive cleavage of the azo bond in aromatic azo compounds to the corresponding amines. The chain is FMN-dependent NADH:quinone oxidoreductase from Saccharophagus degradans (strain 2-40 / ATCC 43961 / DSM 17024).